The following is a 430-amino-acid chain: Tyrosine--tRNA ligase (430 aa).

L-tyrosine is bound at residue Tyr-32. The short motif at 37–46 is the 'HIGH' region element; that stretch reads PTADSLHIGH. L-tyrosine-binding residues include Tyr-172 and Gln-176. The 'KMSKS' region signature appears at 232 to 236; the sequence is KFGKT. Lys-235 contributes to the ATP binding site. The 69-residue stretch at 362 to 430 folds into the S4 RNA-binding domain; the sequence is ISLVDLLADA…KKSYYLIIVE (69 aa).

The protein belongs to the class-I aminoacyl-tRNA synthetase family. TyrS type 1 subfamily. Homodimer.

Its subcellular location is the cytoplasm. The catalysed reaction is tRNA(Tyr) + L-tyrosine + ATP = L-tyrosyl-tRNA(Tyr) + AMP + diphosphate + H(+). Functionally, catalyzes the attachment of tyrosine to tRNA(Tyr) in a two-step reaction: tyrosine is first activated by ATP to form Tyr-AMP and then transferred to the acceptor end of tRNA(Tyr). The protein is Tyrosine--tRNA ligase of Porphyromonas gingivalis (strain ATCC BAA-308 / W83).